The chain runs to 320 residues: Protein EI24 homolog (320 aa).

A run of 3 helical transmembrane segments spans residues 41–61, 94–114, and 175–195; these read QCFLLNGLIFLGSLGVFKWFI, GLLQLFYVFWFYPLYMLSFIL, and ILLLTFFFLEVCVVGVIPYIG. N-linked (GlcNAc...) asparagine glycosylation occurs at N217. A run of 3 helical transmembrane segments spans residues 227-247, 248-268, and 292-312; these read LDFFQSNWAFFAGFGSPCVLA, IFFLSPLVSGALMAILFPLFV, and LGKLPIFYIADTLSMLALSIF.

This sequence belongs to the EI24 (TC 9.B.7) family.

The protein resides in the membrane. In Arabidopsis thaliana (Mouse-ear cress), this protein is Protein EI24 homolog.